Reading from the N-terminus, the 260-residue chain is MNEQPAACRIKVEALGAGFAPAAEQWAERLGLALQVDEAEFALQVGEQGLQLQQLGPDAPGPVRVDFVEGGAAHRRLYGGGSGQMIAKAVGVAQGVRPRVLDATAGLGKDGFVLATLGCEMSLIERQPLIGALLEDGLARAAQDAEVGPIVARMHLLKGNSIELMRNWQGEPPQVIYLDPMFPHREKSALVKKEMRLFRPLVGDDNDAPALLAAALALASHRVVVKRPRKAPCIEGPKPSHGLEGKSSRYDIYPKKALKA.

S-adenosyl-L-methionine is bound by residues E125 to R126 and D179.

Belongs to the methyltransferase superfamily. RsmJ family.

Its subcellular location is the cytoplasm. The catalysed reaction is guanosine(1516) in 16S rRNA + S-adenosyl-L-methionine = N(2)-methylguanosine(1516) in 16S rRNA + S-adenosyl-L-homocysteine + H(+). Functionally, specifically methylates the guanosine in position 1516 of 16S rRNA. The sequence is that of Ribosomal RNA small subunit methyltransferase J from Pseudomonas fluorescens (strain ATCC BAA-477 / NRRL B-23932 / Pf-5).